A 320-amino-acid chain; its full sequence is Pyrroline-5-carboxylate reductase 2 (320 aa).

Residue serine 2 is modified to N-acetylserine. Residues 6 to 11 (IGAGQL) and serine 34 each bind NADP(+). NADPH contacts are provided by alanine 8, glutamine 10, leucine 11, serine 34, glutamate 36, asparagine 56, valine 70, lysine 71, and alanine 97. NADP(+) contacts are provided by residues asparagine 56, 69 to 72 (AVKP), and 95 to 97 (CAA). Position 164 (glutamate 164) interacts with L-proline. Asparagine 230 lines the NADPH pocket. Residues alanine 237 and threonine 238 each contribute to the L-proline site. Residues 293 to 320 (ESPTVSTLAPPSSGKLLTRNPAQGSKRE) are disordered. Residue serine 304 is modified to Phosphoserine.

It belongs to the pyrroline-5-carboxylate reductase family. Homodecamer; composed of 5 homodimers. Interacts with LTO1.

Its subcellular location is the cytoplasm. The protein resides in the mitochondrion. It catalyses the reaction L-proline + NADP(+) = (S)-1-pyrroline-5-carboxylate + NADPH + 2 H(+). The catalysed reaction is L-proline + NAD(+) = (S)-1-pyrroline-5-carboxylate + NADH + 2 H(+). It functions in the pathway amino-acid biosynthesis; L-proline biosynthesis; L-proline from L-glutamate 5-semialdehyde: step 1/1. Its function is as follows. Oxidoreductase that catalyzes the last step in proline biosynthesis, which corresponds to the reduction of pyrroline-5-carboxylate to L-proline using NAD(P)H. At physiologic concentrations, has higher specific activity in the presence of NADH. Involved in cellular response to oxidative stress. In some cell types, such as erythrocytes, its primary function may be the generation of NADP(+). This Rattus norvegicus (Rat) protein is Pyrroline-5-carboxylate reductase 2.